Here is a 196-residue protein sequence, read N- to C-terminus: Protease (196 aa).

Residues H54, D70, and C121 contribute to the active site.

This sequence belongs to the peptidase C5 family. As to quaternary structure, interacts with protease cofactor pVI-C; this interaction is necessary for protease activation.

The protein localises to the virion. Its subcellular location is the host nucleus. It catalyses the reaction Cleaves proteins of the adenovirus and its host cell at two consensus sites: -Yaa-Xaa-Gly-Gly-|-Xaa- and -Yaa-Xaa-Gly-Xaa-|-Gly- (in which Yaa is Met, Ile or Leu, and Xaa is any amino acid).. Its activity is regulated as follows. Requires DNA and protease cofactor for maximal activation. Inside nascent virions, becomes partially activated by binding to the viral DNA, allowing it to cleave the cofactor that binds to the protease and fully activates it. Actin, like the viral protease cofactor, seems to act as a cofactor in the cleavage of cytokeratin 18 and of actin itself. Its function is as follows. Cleaves viral precursor proteins (pTP, pIIIa, pVI, pVII, pVIII, and pX) inside newly assembled particles giving rise to mature virions. Protease complexed to its cofactor slides along the viral DNA to specifically locate and cleave the viral precursors. Mature virions have a weakened organization compared to the unmature virions, thereby facilitating subsequent uncoating. Without maturation, the particle lacks infectivity and is unable to uncoat. Late in adenovirus infection, in the cytoplasm, may participate in the cytoskeleton destruction. Cleaves host cell cytoskeletal keratins K7 and K18. This chain is Protease, found in Bos taurus (Bovine).